The chain runs to 179 residues: Large ribosomal subunit protein uL6 (179 aa).

It belongs to the universal ribosomal protein uL6 family. Part of the 50S ribosomal subunit.

This protein binds to the 23S rRNA, and is important in its secondary structure. It is located near the subunit interface in the base of the L7/L12 stalk, and near the tRNA binding site of the peptidyltransferase center. This chain is Large ribosomal subunit protein uL6, found in Acaryochloris marina (strain MBIC 11017).